A 256-amino-acid polypeptide reads, in one-letter code: Adenosine 5'-phosphosulfate reductase (256 aa).

Positions 120, 121, 203, and 206 each coordinate [4Fe-4S] cluster. Residue C231 is the Nucleophile; cysteine thiosulfonate intermediate of the active site.

The protein belongs to the PAPS reductase family. CysH subfamily. Requires [4Fe-4S] cluster as cofactor.

The protein resides in the cytoplasm. The enzyme catalyses [thioredoxin]-disulfide + sulfite + AMP + 2 H(+) = adenosine 5'-phosphosulfate + [thioredoxin]-dithiol. Its pathway is sulfur metabolism; hydrogen sulfide biosynthesis; sulfite from sulfate. Functionally, catalyzes the formation of sulfite from adenosine 5'-phosphosulfate (APS) using thioredoxin as an electron donor. This is Adenosine 5'-phosphosulfate reductase from Allochromatium vinosum (strain ATCC 17899 / DSM 180 / NBRC 103801 / NCIMB 10441 / D) (Chromatium vinosum).